The following is a 440-amino-acid chain: Proline--tRNA ligase (440 aa).

The protein belongs to the class-II aminoacyl-tRNA synthetase family. ProS type 2 subfamily. Homodimer.

The protein localises to the cytoplasm. It carries out the reaction tRNA(Pro) + L-proline + ATP = L-prolyl-tRNA(Pro) + AMP + diphosphate. In terms of biological role, catalyzes the attachment of proline to tRNA(Pro) in a two-step reaction: proline is first activated by ATP to form Pro-AMP and then transferred to the acceptor end of tRNA(Pro). This is Proline--tRNA ligase from Rhizobium leguminosarum bv. trifolii (strain WSM2304).